Consider the following 1068-residue polypeptide: Ubiquitin-protein ligase E3B (1068 aa).

M1 is subject to N-acetylmethionine. The 30-residue stretch at 29 to 58 (RERAAVVIQAHVRSFLCRSRLQRDIRREID) folds into the IQ domain. Residue S419 is modified to Phosphoserine. The 367-residue stretch at 702–1068 (SQHAMKGVIR…ISMNTGFELS (367 aa)) folds into the HECT domain. The active-site Glycyl thioester intermediate is C1036.

As to expression, widely expressed.

Its subcellular location is the postsynaptic density. It catalyses the reaction S-ubiquitinyl-[E2 ubiquitin-conjugating enzyme]-L-cysteine + [acceptor protein]-L-lysine = [E2 ubiquitin-conjugating enzyme]-L-cysteine + N(6)-ubiquitinyl-[acceptor protein]-L-lysine.. The protein operates within protein modification; protein ubiquitination. Functionally, E3 ubiquitin-protein ligase which accepts ubiquitin from an E2 ubiquitin-conjugating enzyme in the form of a thioester and then directly transfers the ubiquitin to targeted substrates. Ubiquitinates BCKDK and targets it for degradation, thereby regulating various metabolic processes. Involved in the positive regulation of neurite branching in hippocampal neurons and the control of neuronal spine number and morphology, through the ubiquitination of PPP3CC. The polypeptide is Ubiquitin-protein ligase E3B (UBE3B) (Homo sapiens (Human)).